Reading from the N-terminus, the 101-residue chain is Small ribosomal subunit protein uS14 (101 aa).

Residues 1 to 11 show a composition bias toward basic and acidic residues; sequence MAKKSSVEKNN. The disordered stretch occupies residues 1–22; sequence MAKKSSVEKNNRRQRMVKNAAA. Residues 12–22 are compositionally biased toward basic residues; sequence RRQRMVKNAAA.

Belongs to the universal ribosomal protein uS14 family. In terms of assembly, part of the 30S ribosomal subunit. Contacts proteins S3 and S10.

Its function is as follows. Binds 16S rRNA, required for the assembly of 30S particles and may also be responsible for determining the conformation of the 16S rRNA at the A site. This is Small ribosomal subunit protein uS14 from Afipia carboxidovorans (strain ATCC 49405 / DSM 1227 / KCTC 32145 / OM5) (Oligotropha carboxidovorans).